A 199-amino-acid polypeptide reads, in one-letter code: TATA-box-binding protein (199 aa).

Repeat copies occupy residues 10–86 and 101–177.

This sequence belongs to the TBP family.

Functionally, general factor that plays a role in the activation of archaeal genes transcribed by RNA polymerase. Binds specifically to the TATA box promoter element which lies close to the position of transcription initiation. The sequence is that of TATA-box-binding protein from Pyrobaculum aerophilum (strain ATCC 51768 / DSM 7523 / JCM 9630 / CIP 104966 / NBRC 100827 / IM2).